The primary structure comprises 1029 residues: Tyrosine-protein kinase-like otk (1029 aa).

Residues 1–18 (MISIYGLVMALMMASVLA) form the signal peptide. The Extracellular portion of the chain corresponds to 19-577 (SSSRFQRVPQ…GGDGFLVTRA (559 aa)). 5 consecutive Ig-like C2-type domains span residues 21–110 (SRFQ…AKLS), 109–195 (LSVI…RVMS), 247–361 (PEDL…APIS), 364–459 (PGIL…VAIN), and 464–554 (PKFS…VQLV). N35 is a glycosylation site (N-linked (GlcNAc...) asparagine). 4 cysteine pairs are disulfide-bonded: C42/C91, C133/C184, C272/C350, and C395/C443. N332, N413, N425, N440, N453, N508, and N520 each carry an N-linked (GlcNAc...) asparagine glycan. The cysteines at positions 486 and 538 are disulfide-linked. Residues 578 to 598 (VLITMTVALAYIVLVVGLMLW) traverse the membrane as a helical segment. Residues 599–1029 (CRYRRQARKA…LSKAMQSAEK (431 aa)) are Cytoplasmic-facing. Disordered stretches follow at residues 613–675 (LSTK…KKSA) and 714–756 (SPSD…KTSM). Positions 651–669 (KSSGDAQKSDDTACSQQSR) are enriched in polar residues. S674 carries the post-translational modification Phosphoserine. The 337-residue stretch at 688-1024 (LSELIQIGRG…QLGAALSKAM (337 aa)) folds into the Protein kinase; inactive domain. Residues 716 to 727 (SDKDADTEKQHS) show a composition bias toward basic and acidic residues.

This sequence belongs to the protein kinase superfamily. Tyr protein kinase family. Insulin receptor subfamily. Interacts with plexA; component of a receptor complex that mediates the repulsive signaling in response to Semaphorin ligands.

The protein resides in the cell membrane. In terms of biological role, acts as a calcium-dependent, homophilic cell adhesion molecule that regulates neural recognition during the development of the nervous system. Component of the repulsive Plexin signaling response to regulate motor axon guidance at the embryonic stage. Also component of a receptor complex that is required in the adult visual system to innervate the lamina layer; specific targeting of R1-R6 axons. This Drosophila simulans (Fruit fly) protein is Tyrosine-protein kinase-like otk.